The sequence spans 406 residues: METLLLVQLFHELALKGKNRPFFLKRAKAHVRRALKGLGVALEGEWPMALLFRLPEEAWPEAKARLQDTLGVERFARVHRTPPDLEALKAALEKALEGQAFGSFRITAKRSDKAFPLTSPEIERALGAFVKGKTGAPVRLKGAEREFVVRVLPGAALLEVERHPGPGGLPPGVSGRVVALLSGGIDSPVAAYRLMRRGAEVVLVHFHPFPLLSGASREKAKALAERLARFQHRLRLHLVPFSEVQRHIIVEAPTAYRVVLYRRYMLRIAEAIAREEGALALCTGDSLGQVASQTLENLHAVNQAATLPVFRPLIGWDKEEIVAEAQRIGTYATSILPDEECCTLFAPKHPVTRARLEVVLETEARLPTEELLALALKEREVLTYTWPGKPLPEEPEGAFIMEHGPA.

One can recognise a THUMP domain in the interval 60-162 (PEAKARLQDT…PGAALLEVER (103 aa)). Residues 180 to 181 (LL), 205 to 206 (HF), R262, G284, and Q293 each bind ATP.

The protein belongs to the ThiI family.

The protein resides in the cytoplasm. It catalyses the reaction [ThiI sulfur-carrier protein]-S-sulfanyl-L-cysteine + a uridine in tRNA + 2 reduced [2Fe-2S]-[ferredoxin] + ATP + H(+) = [ThiI sulfur-carrier protein]-L-cysteine + a 4-thiouridine in tRNA + 2 oxidized [2Fe-2S]-[ferredoxin] + AMP + diphosphate. The catalysed reaction is [ThiS sulfur-carrier protein]-C-terminal Gly-Gly-AMP + S-sulfanyl-L-cysteinyl-[cysteine desulfurase] + AH2 = [ThiS sulfur-carrier protein]-C-terminal-Gly-aminoethanethioate + L-cysteinyl-[cysteine desulfurase] + A + AMP + 2 H(+). Its pathway is cofactor biosynthesis; thiamine diphosphate biosynthesis. Functionally, catalyzes the ATP-dependent transfer of a sulfur to tRNA to produce 4-thiouridine in position 8 of tRNAs, which functions as a near-UV photosensor. Also catalyzes the transfer of sulfur to the sulfur carrier protein ThiS, forming ThiS-thiocarboxylate. This is a step in the synthesis of thiazole, in the thiamine biosynthesis pathway. The sulfur is donated as persulfide by IscS. The sequence is that of Probable tRNA sulfurtransferase from Thermus thermophilus (strain ATCC 27634 / DSM 579 / HB8).